The sequence spans 318 residues: NADH-ubiquinone oxidoreductase chain 1 (318 aa).

Transmembrane regions (helical) follow at residues 2 to 22 (FLMN…FLTL), 68 to 88 (ISLF…MWIP), 102 to 122 (ILFI…SGWA), 146 to 166 (LAII…SSLI), 171 to 191 (FTWL…STLA), 217 to 237 (AGPF…MNAL), 253 to 273 (EMFT…FLWI), and 294 to 314 (LPLT…MACI).

It belongs to the complex I subunit 1 family.

It localises to the mitochondrion inner membrane. The catalysed reaction is a ubiquinone + NADH + 5 H(+)(in) = a ubiquinol + NAD(+) + 4 H(+)(out). Core subunit of the mitochondrial membrane respiratory chain NADH dehydrogenase (Complex I) that is believed to belong to the minimal assembly required for catalysis. Complex I functions in the transfer of electrons from NADH to the respiratory chain. The immediate electron acceptor for the enzyme is believed to be ubiquinone. The protein is NADH-ubiquinone oxidoreductase chain 1 (MT-ND1) of Tamias sibiricus (Siberian chipmunk).